Here is a 400-residue protein sequence, read N- to C-terminus: Diphosphomevalonate decarboxylase (400 aa).

Residue alanine 2 is modified to N-acetylalanine. Residues tyrosine 23–lysine 26, arginine 78, serine 156–arginine 161, and threonine 212 contribute to the (R)-5-diphosphomevalonate site.

This sequence belongs to the diphosphomevalonate decarboxylase family. In terms of assembly, homodimer.

Its subcellular location is the cytoplasm. The catalysed reaction is (R)-5-diphosphomevalonate + ATP = isopentenyl diphosphate + ADP + phosphate + CO2. Its pathway is steroid biosynthesis; cholesterol biosynthesis. In terms of biological role, catalyzes the ATP dependent decarboxylation of (R)-5-diphosphomevalonate to form isopentenyl diphosphate (IPP). Functions in the mevalonate (MVA) pathway leading to isopentenyl diphosphate (IPP), a key precursor for the biosynthesis of isoprenoids and sterol synthesis. The sequence is that of Diphosphomevalonate decarboxylase (MVD) from Bos taurus (Bovine).